The primary structure comprises 224 residues: uncharacterized protein (224 aa).

An N-terminal signal peptide occupies residues 1–16 (MKILYSFLLLPFFSCA).

This is an uncharacterized protein from Escherichia coli.